Consider the following 128-residue polypeptide: Large-conductance mechanosensitive channel (128 aa).

The next 2 helical transmembrane spans lie at 10-30 (FAMRGNVVDMAVGVIIGGAFG) and 76-96 (GMFIQNVFDFIIIAFAIFLMI).

This sequence belongs to the MscL family. In terms of assembly, homopentamer.

The protein localises to the cell inner membrane. In terms of biological role, channel that opens in response to stretch forces in the membrane lipid bilayer. May participate in the regulation of osmotic pressure changes within the cell. In Actinobacillus succinogenes (strain ATCC 55618 / DSM 22257 / CCUG 43843 / 130Z), this protein is Large-conductance mechanosensitive channel.